The primary structure comprises 97 residues: Small ribosomal subunit protein bS6 (97 aa).

Belongs to the bacterial ribosomal protein bS6 family.

Binds together with bS18 to 16S ribosomal RNA. The chain is Small ribosomal subunit protein bS6 from Bifidobacterium longum (strain NCC 2705).